A 496-amino-acid polypeptide reads, in one-letter code: Histidine--tRNA ligase (496 aa).

It belongs to the class-II aminoacyl-tRNA synthetase family. In terms of assembly, homodimer.

Its subcellular location is the cytoplasm. The catalysed reaction is tRNA(His) + L-histidine + ATP = L-histidyl-tRNA(His) + AMP + diphosphate + H(+). The polypeptide is Histidine--tRNA ligase (Bartonella bacilliformis (strain ATCC 35685 / KC583 / Herrer 020/F12,63)).